Consider the following 100-residue polypeptide: Integration host factor subunit alpha (100 aa).

Belongs to the bacterial histone-like protein family. Heterodimer of an alpha and a beta chain.

This protein is one of the two subunits of integration host factor, a specific DNA-binding protein that functions in genetic recombination as well as in transcriptional and translational control. This chain is Integration host factor subunit alpha, found in Cereibacter sphaeroides (strain ATCC 17023 / DSM 158 / JCM 6121 / CCUG 31486 / LMG 2827 / NBRC 12203 / NCIMB 8253 / ATH 2.4.1.) (Rhodobacter sphaeroides).